The sequence spans 221 residues: Orotidine 5'-phosphate decarboxylase (221 aa).

Residues Asp-12, Lys-34, 60 to 69 (DFKVADIPNT), Ser-117, 170 to 180 (PGVGAQGGKAS), Gly-193, and Arg-194 contribute to the substrate site. Residue Lys-62 is the Proton donor of the active site.

This sequence belongs to the OMP decarboxylase family. Type 1 subfamily. As to quaternary structure, homodimer.

The catalysed reaction is orotidine 5'-phosphate + H(+) = UMP + CO2. It functions in the pathway pyrimidine metabolism; UMP biosynthesis via de novo pathway; UMP from orotate: step 2/2. Its function is as follows. Catalyzes the decarboxylation of orotidine 5'-monophosphate (OMP) to uridine 5'-monophosphate (UMP). The protein is Orotidine 5'-phosphate decarboxylase of Methanosarcina barkeri (strain Fusaro / DSM 804).